A 905-amino-acid chain; its full sequence is MFKGIRKRASNLSIYAVTSNLSATNAPSDQQPASNSPSSYESILSQVHDFEIALKAMDYLLDDRTQQGTELLHEQAQLGSSDGKPHAIFPLALGVMEFIEATLGFEPEVMARAHKTLNDAESASTTNAKYNVRHQLATSNIYPPGTEFQVTLAESTLLNALLMLLTENNGMVESVKALYKLRKAYQTLDAVYKKIKELEPVFNRNLAKLRKAANKGLLEVPRLNGLVNGGTRLKHSISTVDLPGYESLGSSSSSSSATLPEDLKLMKNLEKIYLMRKARIEGTNLGNNTGVQHQPLNLFSDLASSIAMKQNGNGVETSLPIIPQYGKFNNGNEEQVEEQEEEGEGEEEEEENSDNEHFVDAVEELTIGDINSSSLADSSAQSILSSVETSPSEVQSTDMHLHVSTTDEFIHSGVQLCFGILQVVLSLIPPAIGKVLSIVGFKGERETGLKLLWKTAITSRNVHGELALLFLLMFYDGPVQFVDTGFRLPSANKLKNIINLENKTSVTDDEVELIKDSPESYTSQLLKRARHHFPHNALWILQEGRMLAAEGRLAQASTLMQNFTDNPNNKIQMQQIEALLIFDRATIYIYMHEYDKAARDLIYLIEINSWSKAVYLFMAAACYLERYRMVRMGLQSPQINADTKLSLNGDVELEAKKYSDLFTKYLNLSLSYVPGHGANAQKKGGLGGSGKQMPFDKFLLRKWKHIEQRKKRHPELSLADVVGTSLIHELIYFWNGYNRMSPQDFELALKLLGYSGAPNTELSANTLHNNYAKIEETEDEAMIRYFLQSVALRQLGKVKQGLGILDSHVISKYVISEVPQFRFHKMTYSPYLYPTAFYEKTMFVWLLRTSESTIKQDVGRAVHECKSYLKKAETVGEGDYELSNRTSMRIKAAGDRLDQLGSLSR.

Residues 325–356 (YGKFNNGNEEQVEEQEEEGEGEEEEEENSDNE) form a disordered region. Positions 334–353 (EQVEEQEEEGEGEEEEEENS) are enriched in acidic residues.

The protein belongs to the IML2 family. Interacts with lipid droplet proteins.

The protein resides in the cytoplasm. It is found in the nucleus. Its function is as follows. Inclusion body (IB) resident protein that interacts strongly with lipid droplet (LD) proteins. Involved in LD-mediated IB clearing after protein folding stress, probably by enabling access to the IBs of an LD-stored soluble sterol derivative that acts as a chaperone in inclusion clearing. The sequence is that of Inclusion body clearance protein IML2 (IML2) from Lodderomyces elongisporus (strain ATCC 11503 / CBS 2605 / JCM 1781 / NBRC 1676 / NRRL YB-4239) (Yeast).